The primary structure comprises 165 residues: Disulfide bond formation protein B (165 aa).

The Cytoplasmic portion of the chain corresponds to 1 to 16; sequence MTILNSLNQFSKGRLS. A helical transmembrane segment spans residues 17 to 33; the sequence is WLLLLLFVVFFEACALY. Residues 34–51 lie on the Periplasmic side of the membrane; the sequence is FQHVMMLAPCVMCIYERV. A disulfide bridge links Cys43 with Cys46. Residues 52–67 form a helical membrane-spanning segment; the sequence is AMMGVGVAAIVGLMAP. Residues 68–74 are Cytoplasmic-facing; the sequence is NNPIFRW. The helical transmembrane segment at 75–92 threads the bilayer; that stretch reads LGLIGWGLSSYKGLLLAQ. The Periplasmic portion of the chain corresponds to 93–147; the sequence is QHVDYQFNPSPFATCDLFVTFPSWRPLNQWAPWIFEAYGDCSKIVWQFLDLSMPQ. Cysteines 107 and 133 form a disulfide. A helical membrane pass occupies residues 148–165; the sequence is WLVVIFAGNLIALALIVI.

Belongs to the DsbB family.

Its subcellular location is the cell inner membrane. Required for disulfide bond formation in some periplasmic proteins. Acts by oxidizing the DsbA protein. The polypeptide is Disulfide bond formation protein B (Vibrio alginolyticus).